Here is a 227-residue protein sequence, read N- to C-terminus: Cytochrome c oxidase subunit 2 (227 aa).

The Mitochondrial intermembrane portion of the chain corresponds to 1 to 14 (MAYPFQLGFQDAAS). A helical transmembrane segment spans residues 15–45 (PIMEELLHFHDHTLMIVFLISSLVLYIITLM). Residues 46 to 59 (LTTKLTHTSTMDAQ) lie on the Mitochondrial matrix side of the membrane. A helical transmembrane segment spans residues 60-87 (EVETVWTILPAIILILIALPSLRILYMM). Over 88 to 227 (DEVNNPSLTV…VFEKWSVSML (140 aa)) the chain is Mitochondrial intermembrane. Positions 161, 196, 198, 200, 204, and 207 each coordinate Cu cation. Glutamate 198 serves as a coordination point for Mg(2+).

It belongs to the cytochrome c oxidase subunit 2 family. Component of the cytochrome c oxidase (complex IV, CIV), a multisubunit enzyme composed of 14 subunits. The complex is composed of a catalytic core of 3 subunits MT-CO1, MT-CO2 and MT-CO3, encoded in the mitochondrial DNA, and 11 supernumerary subunits COX4I, COX5A, COX5B, COX6A, COX6B, COX6C, COX7A, COX7B, COX7C, COX8 and NDUFA4, which are encoded in the nuclear genome. The complex exists as a monomer or a dimer and forms supercomplexes (SCs) in the inner mitochondrial membrane with NADH-ubiquinone oxidoreductase (complex I, CI) and ubiquinol-cytochrome c oxidoreductase (cytochrome b-c1 complex, complex III, CIII), resulting in different assemblies (supercomplex SCI(1)III(2)IV(1) and megacomplex MCI(2)III(2)IV(2)). Found in a complex with TMEM177, COA6, COX18, COX20, SCO1 and SCO2. Interacts with TMEM177 in a COX20-dependent manner. Interacts with COX20. Interacts with COX16. Cu cation serves as cofactor.

The protein localises to the mitochondrion inner membrane. It carries out the reaction 4 Fe(II)-[cytochrome c] + O2 + 8 H(+)(in) = 4 Fe(III)-[cytochrome c] + 2 H2O + 4 H(+)(out). Functionally, component of the cytochrome c oxidase, the last enzyme in the mitochondrial electron transport chain which drives oxidative phosphorylation. The respiratory chain contains 3 multisubunit complexes succinate dehydrogenase (complex II, CII), ubiquinol-cytochrome c oxidoreductase (cytochrome b-c1 complex, complex III, CIII) and cytochrome c oxidase (complex IV, CIV), that cooperate to transfer electrons derived from NADH and succinate to molecular oxygen, creating an electrochemical gradient over the inner membrane that drives transmembrane transport and the ATP synthase. Cytochrome c oxidase is the component of the respiratory chain that catalyzes the reduction of oxygen to water. Electrons originating from reduced cytochrome c in the intermembrane space (IMS) are transferred via the dinuclear copper A center (CU(A)) of subunit 2 and heme A of subunit 1 to the active site in subunit 1, a binuclear center (BNC) formed by heme A3 and copper B (CU(B)). The BNC reduces molecular oxygen to 2 water molecules using 4 electrons from cytochrome c in the IMS and 4 protons from the mitochondrial matrix. The protein is Cytochrome c oxidase subunit 2 (MT-CO2) of Balaenoptera physalus (Fin whale).